The sequence spans 202 residues: Transmembrane 4 L6 family member 4 (202 aa).

The Cytoplasmic portion of the chain corresponds to 1–9 (MCTGGCARC). Residues 10–30 (LGGTLIPLAVFAVLANILLFF) traverse the membrane as a helical segment. The Extracellular portion of the chain corresponds to 31–48 (PGGKVVDDNSHLSDEVWY). The helical transmembrane segment at 49-69 (FGGILGSGVLMIFPALVFLGL) threads the bilayer. The Cytoplasmic portion of the chain corresponds to 70–93 (QNNDCCGCCGNESCGKRFAMFTST). Residues 94 to 114 (LFAVVGFLGAAYSFIVSAVSI) form a helical membrane-spanning segment. Over 115-158 (NKGPKCFMTNNTWGYPFHDGDYLNDQALWSKCEEPRDVVPWNLT) the chain is Extracellular. The N-linked (GlcNAc...) asparagine glycan is linked to Asn-156. A helical transmembrane segment spans residues 159–179 (LFSILLVIGGIQMVLCAIQVI). Over 180-202 (NGLLGTLCGDCQCCGCCGGDRPV) the chain is Cytoplasmic.

Belongs to the L6 tetraspanin family. In terms of tissue distribution, expressed in liver and testis. Up-regulated in regenerating liver after partial hepatectomy.

Its subcellular location is the membrane. In terms of biological role, regulates the adhesive and proliferative status of intestinal epithelial cells. Can mediate density-dependent cell proliferation. This is Transmembrane 4 L6 family member 4 (Tm4sf4) from Rattus norvegicus (Rat).